The chain runs to 228 residues: Probable octanoyltransferase (228 aa).

Residues 27 to 198 (SGGDDAFILV…AFEEVFEAKV (172 aa)) form the BPL/LPL catalytic domain. Residues 65–72 (RGGDATYH), 129–131 (SIG), and 142–144 (GVA) each bind substrate. Cys160 serves as the catalytic Acyl-thioester intermediate.

This sequence belongs to the LipB family.

It localises to the cytoplasm. It catalyses the reaction octanoyl-[ACP] + L-lysyl-[protein] = N(6)-octanoyl-L-lysyl-[protein] + holo-[ACP] + H(+). It functions in the pathway protein modification; protein lipoylation via endogenous pathway; protein N(6)-(lipoyl)lysine from octanoyl-[acyl-carrier-protein]: step 1/2. Catalyzes the transfer of endogenously produced octanoic acid from octanoyl-acyl-carrier-protein onto the lipoyl domains of lipoate-dependent enzymes. Lipoyl-ACP can also act as a substrate although octanoyl-ACP is likely to be the physiological substrate. This is Probable octanoyltransferase from Pyrobaculum calidifontis (strain DSM 21063 / JCM 11548 / VA1).